The primary structure comprises 273 residues: Putative phosphoenolpyruvate synthase regulatory protein (273 aa).

154–161 serves as a coordination point for ADP; the sequence is GVSRSGKT.

The protein belongs to the pyruvate, phosphate/water dikinase regulatory protein family. PSRP subfamily.

It catalyses the reaction [pyruvate, water dikinase] + ADP = [pyruvate, water dikinase]-phosphate + AMP + H(+). The enzyme catalyses [pyruvate, water dikinase]-phosphate + phosphate + H(+) = [pyruvate, water dikinase] + diphosphate. Its function is as follows. Bifunctional serine/threonine kinase and phosphorylase involved in the regulation of the phosphoenolpyruvate synthase (PEPS) by catalyzing its phosphorylation/dephosphorylation. This chain is Putative phosphoenolpyruvate synthase regulatory protein, found in Neisseria gonorrhoeae (strain ATCC 700825 / FA 1090).